Consider the following 419-residue polypeptide: Carboxypeptidase A1 (419 aa).

An N-terminal signal peptide occupies residues 1-16 (MWGLLIFSVLLGGVLA). A propeptide spans 17-110 (KEDFVGHQVL…QEQMFASQGR (94 aa)) (activation peptide). The 294-residue stretch at 121-414 (TYHTLEEIYD…LALLTIMEHT (294 aa)) folds into the Peptidase M14 domain. Zn(2+)-binding residues include His-179 and Glu-182. Substrate-binding positions include 179 to 182 (HSRE), Arg-237, and 254 to 255 (NR). Residues Cys-248 and Cys-271 are joined by a disulfide bond. His-306 serves as a coordination point for Zn(2+). Substrate-binding positions include 307 to 308 (SY) and Tyr-358. The active-site Proton donor/acceptor is the Glu-380.

This sequence belongs to the peptidase M14 family. In terms of assembly, monomer. May form a complex with proelastase 2. Zn(2+) is required as a cofactor.

It is found in the secreted. The enzyme catalyses Release of a C-terminal amino acid, but little or no action with -Asp, -Glu, -Arg, -Lys or -Pro.. The catalysed reaction is leukotriene C4 + H2O = leukotriene F4 + glycine. In terms of biological role, carboxypeptidase that catalyzes the release of a C-terminal amino acid, but has little or no action with -Asp, -Glu, -Arg, -Lys or -Pro. Catalyzes the conversion of leukotriene C4 to leukotriene F4 via the hydrolysis of an amide bond. The chain is Carboxypeptidase A1 (CPA1) from Sus scrofa (Pig).